Reading from the N-terminus, the 516-residue chain is Cytochrome P450 1A2 (516 aa).

S69 carries O-linked (GlcNAc) serine glycosylation. Residues F226 and 361 to 365 each bind substrate; that span reads DRPQL. C458 contributes to the heme binding site.

It belongs to the cytochrome P450 family. Interacts with PGRMC1; the interaction requires PGRMC1 homodimerization. It depends on heme as a cofactor.

Its subcellular location is the endoplasmic reticulum membrane. It localises to the microsome membrane. The enzyme catalyses an organic molecule + reduced [NADPH--hemoprotein reductase] + O2 = an alcohol + oxidized [NADPH--hemoprotein reductase] + H2O + H(+). It carries out the reaction 17beta-estradiol + reduced [NADPH--hemoprotein reductase] + O2 = 2-hydroxy-17beta-estradiol + oxidized [NADPH--hemoprotein reductase] + H2O + H(+). The catalysed reaction is 17beta-estradiol + reduced [NADPH--hemoprotein reductase] + O2 = 4-hydroxy-17beta-estradiol + oxidized [NADPH--hemoprotein reductase] + H2O + H(+). It catalyses the reaction estrone + reduced [NADPH--hemoprotein reductase] + O2 = 2-hydroxyestrone + oxidized [NADPH--hemoprotein reductase] + H2O + H(+). The enzyme catalyses estrone + reduced [NADPH--hemoprotein reductase] + O2 = 4-hydroxyestrone + oxidized [NADPH--hemoprotein reductase] + H2O + H(+). It carries out the reaction cholesterol + reduced [NADPH--hemoprotein reductase] + O2 = 25-hydroxycholesterol + oxidized [NADPH--hemoprotein reductase] + H2O + H(+). The catalysed reaction is all-trans-retinol + reduced [NADPH--hemoprotein reductase] + O2 = all-trans-retinal + oxidized [NADPH--hemoprotein reductase] + 2 H2O + H(+). It catalyses the reaction all-trans-retinal + reduced [NADPH--hemoprotein reductase] + O2 = all-trans-retinoate + oxidized [NADPH--hemoprotein reductase] + H2O + 2 H(+). The enzyme catalyses (5Z,8Z,11Z,14Z)-eicosatetraenoate + reduced [NADPH--hemoprotein reductase] + O2 = (14R,15S)-epoxy-(5Z,8Z,11Z)-eicosatrienoate + oxidized [NADPH--hemoprotein reductase] + H2O + H(+). It carries out the reaction (5Z,8Z,11Z,14Z)-eicosatetraenoate + reduced [NADPH--hemoprotein reductase] + O2 = (14S,15R)-epoxy-(5Z,8Z,11Z)-eicosatrienoate + oxidized [NADPH--hemoprotein reductase] + H2O + H(+). The catalysed reaction is (5Z,8Z,11Z,14Z,17Z)-eicosapentaenoate + reduced [NADPH--hemoprotein reductase] + O2 = (17R,18S)-epoxy-(5Z,8Z,11Z,14Z)-eicosatetraenoate + oxidized [NADPH--hemoprotein reductase] + H2O + H(+). It catalyses the reaction (4Z,7Z,10Z,13Z,16Z,19Z)-docosahexaenoate + reduced [NADPH--hemoprotein reductase] + O2 = (19R,20S)-epoxy-(4Z,7Z,10Z,13Z,16Z)-docosapentaenoate + oxidized [NADPH--hemoprotein reductase] + H2O + H(+). The enzyme catalyses (5S)-hydroperoxy-(6E,8Z,11Z,14Z)-eicosatetraenoate = 5-oxo-(6E,8Z,11Z,14Z)-eicosatetraenoate + H2O. It carries out the reaction (12S)-hydroperoxy-(5Z,8Z,10E,14Z)-eicosatetraenoate = 12-oxo-(5Z,8Z,10E,14Z)-eicosatetraenoate + H2O. The catalysed reaction is (15S)-hydroperoxy-(5Z,8Z,11Z,13E)-eicosatetraenoate = 15-oxo-(5Z,8Z,11Z,13E)-eicosatetraenoate + H2O. It catalyses the reaction (13S)-hydroperoxy-(9Z,11E)-octadecadienoate = 13-oxo-(9Z,11E)-octadecadienoate + H2O. The enzyme catalyses (5Z,8Z,11Z,14Z)-eicosatetraenoate + reduced [NADPH--hemoprotein reductase] + O2 = 13-hydroxy-(5Z,8Z,11Z,14Z)-eicosatetraenoate + oxidized [NADPH--hemoprotein reductase] + H2O + H(+). It carries out the reaction (5Z,8Z,11Z,14Z)-eicosatetraenoate + reduced [NADPH--hemoprotein reductase] + O2 = 19-hydroxy-(5Z,8Z,11Z,14Z)-eicosatetraenoate + oxidized [NADPH--hemoprotein reductase] + H2O + H(+). The catalysed reaction is (9Z,12Z)-octadecadienoate + reduced [NADPH--hemoprotein reductase] + O2 = 11-hydroxy-(9Z,12Z)-octadecadienoate + oxidized [NADPH--hemoprotein reductase] + H2O + H(+). It functions in the pathway cofactor metabolism; retinol metabolism. The protein operates within steroid metabolism; cholesterol metabolism. It participates in lipid metabolism; arachidonate metabolism. A cytochrome P450 monooxygenase involved in the metabolism of various endogenous substrates, including fatty acids, steroid hormones and vitamins. Mechanistically, uses molecular oxygen inserting one oxygen atom into a substrate, and reducing the second into a water molecule, with two electrons provided by NADPH via cytochrome P450 reductase (NADPH--hemoprotein reductase). Catalyzes the hydroxylation of carbon-hydrogen bonds. Exhibits high catalytic activity for the formation of hydroxyestrogens from estrone (E1) and 17beta-estradiol (E2), namely 2-hydroxy E1 and E2. Metabolizes cholesterol toward 25-hydroxycholesterol, a physiological regulator of cellular cholesterol homeostasis. May act as a major enzyme for all-trans retinoic acid biosynthesis in the liver. Catalyzes two successive oxidative transformation of all-trans retinol to all-trans retinal and then to the active form all-trans retinoic acid. Primarily catalyzes stereoselective epoxidation of the last double bond of polyunsaturated fatty acids (PUFA), displaying a strong preference for the (R,S) stereoisomer. Catalyzes bisallylic hydroxylation and omega-1 hydroxylation of PUFA. May also participate in eicosanoids metabolism by converting hydroperoxide species into oxo metabolites (lipoxygenase-like reaction, NADPH-independent). Plays a role in the oxidative metabolism of xenobiotics. Catalyzes the N-hydroxylation of heterocyclic amines and the O-deethylation of phenacetin. Metabolizes caffeine via N3-demethylation. The protein is Cytochrome P450 1A2 (CYP1A2) of Oryctolagus cuniculus (Rabbit).